A 163-amino-acid chain; its full sequence is Translation initiation factor IF-3-like (163 aa).

Belongs to the IF-3 family.

In Nostoc sp. (strain PCC 7120 / SAG 25.82 / UTEX 2576), this protein is Translation initiation factor IF-3-like.